The following is a 63-amino-acid chain: Juvenile hormone esterase, isoform B (63 aa).

A glycan (N-linked (GlcNAc...) asparagine) is linked at Asn20.

Belongs to the type-B carboxylesterase/lipase family. As to expression, fat body, the site of their biosynthesis, and the hemolymph where it is secreted.

The catalysed reaction is juvenile hormone I + H2O = juvenile hormone I carboxylate + methanol + H(+). The enzyme catalyses juvenile hormone III + H2O = juvenile hormone III carboxylate + methanol + H(+). Its function is as follows. JH esterase plays a crucial role in the decrease of JH activity in lepidopteran insects, by hydrolyzing the methyl ester of JH. It is also involved in the transport of JH. In Trichoplusia ni (Cabbage looper), this protein is Juvenile hormone esterase, isoform B.